Reading from the N-terminus, the 480-residue chain is MIRAAPPPLFLLLLLLLLLVSWASRGEAAPDQDEIQRLPGLAKQPSFRQYSGYLKGSGSKHLHYWFVESQKDPENSPVVLWLNGGPGCSSLDGLLTEHGPFLVQPDGVTLEYNPYSWNLIANVLYLESPAGVGFSYSDDKFYATNDTEVAQSNFEALQDFFRLFPEYKNNKLFLTGESYAGIYIPTLAVLVMQDPSMNLQGLAVGNGLSSYEQNDNSLVYFAYYHGLLGNRLWSSLQTHCCSQNKCNFYDNKDLECVTNLQEVARIVGNSGLNIYNLYAPCAGGVPSHFRYEKDTVVVQDLGNIFTRLPLKRMWHQALLRSGDKVRMDPPCTNTTAASTYLNNPYVRKALNIPEQLPQWDMCNFLVNLQYRRLYRSMNSQYLKLLSSQKYQILLYNGDVDMACNFMGDEWFVDSLNQKMEVQRRPWLVKYGDSGEQIAGFVKEFSHIAFLTIKGAGHMVPTDKPLAAFTMFSRFLNKQPY.

A signal peptide spans 1–28 (MIRAAPPPLFLLLLLLLLLVSWASRGEA). 4 cysteine pairs are disulfide-bonded: cysteine 88–cysteine 362, cysteine 240–cysteine 256, cysteine 241–cysteine 246, and cysteine 281–cysteine 331. An N-linked (GlcNAc...) asparagine glycan is attached at asparagine 145. Residue serine 178 is part of the active site. Residue asparagine 333 is glycosylated (N-linked (GlcNAc...) asparagine). Residues aspartate 400 and histidine 457 contribute to the active site.

This sequence belongs to the peptidase S10 family. Heterodimer of a 32 kDa chain and a 20 kDa chain; disulfide-linked.

The protein localises to the lysosome. The catalysed reaction is Release of a C-terminal amino acid with broad specificity.. Its function is as follows. Protective protein appears to be essential for both the activity of beta-galactosidase and neuraminidase, it associates with these enzymes and exerts a protective function necessary for their stability and activity. This protein is also a carboxypeptidase and can deamidate tachykinins. The protein is Lysosomal protective protein (CTSA) of Homo sapiens (Human).